Reading from the N-terminus, the 89-residue chain is MTITDVRVRKVNLEGKMKAIVSVTFDNAFVVHDVKVVEGQKGLFVAMPSRRTPEGEYRDIAHPISAKAREQISVAVLNAYQEALASAIA.

Belongs to the SpoVG family.

Its function is as follows. Could be involved in septation. This Heliobacterium modesticaldum (strain ATCC 51547 / Ice1) protein is Putative septation protein SpoVG.